Reading from the N-terminus, the 853-residue chain is cGMP-dependent protein kinase (853 aa).

The autoinhibitory segment stretch occupies residues 1–29 (MEEDDNLKKGNERNKKKAIFSNDDFTGED). 4 cNMP-binding domain regions span residues 58-173 (VCST…FIDS), 176-275 (VFDM…IVLG), 295-398 (IFKQ…LGNN), and 418-517 (IFRY…LQII). Positions 113, 122, 123, 125, 132, and 133 each coordinate 3',5'-cyclic GMP. 3',5'-cyclic GMP is bound by residues arginine 473, glycine 482, glutamate 483, alanine 485, arginine 492, and threonine 493. The Protein kinase domain maps to 541–798 (LETERIIGRG…FKDIKDHPFF (258 aa)). Residues 547–555 (IGRGTFGTV) and lysine 570 contribute to the ATP site. Catalysis depends on aspartate 664, which acts as the Proton acceptor. The AGC-kinase C-terminal domain occupies 799–853 (SNFNWDKLAGRLLDPPLVSKSETYAEDIDIKQIEEEDAEDDEEPLNDEDNWDIDF). Positions 827–853 (DIKQIEEEDAEDDEEPLNDEDNWDIDF) are disordered. A compositionally biased stretch (acidic residues) spans 832-853 (EEEDAEDDEEPLNDEDNWDIDF).

Belongs to the protein kinase superfamily. AGC Ser/Thr protein kinase family. cGMP subfamily. As to quaternary structure, monomer. The cofactor is Mg(2+). Post-translationally, autophosphorylated.

Its subcellular location is the cytoplasm. The protein localises to the endoplasmic reticulum membrane. The catalysed reaction is L-seryl-[protein] + ATP = O-phospho-L-seryl-[protein] + ADP + H(+). The enzyme catalyses L-threonyl-[protein] + ATP = O-phospho-L-threonyl-[protein] + ADP + H(+). Activated by cGMP. Not activated by cAMP. cGMP binding allosterically triggers a conformational change at the alpha C-helix of cGMP-binding domain 4, which bridges the regulatory and catalytic domains, causing the capping triad, composed of Arg-484, Gln-532 and Asp-533, to form and stabilize the active conformation. The cGMP-binding domains acts cooperatively to activate PKG. Serine/threonine protein kinase which acts as a downstream effector of the second messenger cGMP. Controls the release of Ca(2+) from intracellular stores by regulating phosphoinositide biosynthesis. Ca(2+) signals are essential for merozoite and sporozoite invasion and egress from host hepatocytes and erythrocytes, and, in the mosquito vector, for gametocyte activation, and ookinete and sporozoite motility. During the host liver stage, regulates the initial invasion of host hepatocytes by sporozoites by regulating sporozoite motility and microneme exocytosis. Following parasite development in the hepatocytes, required for the release of merosomes, a vesicle containing the mature merozoites. During the asexual blood stage, required for the progression from schizont to the ring stage following merozoite invasion of host erythrocytes and for merozoite egress. Regulates merozoite egress by promoting the release of exonemes and micronemes which contain proteins essential for egress. Phosphorylates CDPK1 predominantly at the late schizont stage; phosphorylation at 'Ser-64' regulates CDPK1 protein-protein interaction and phosphorylation at 'Thr-231' may regulate CDPK1 kinase activity. In the mosquito vector, required for the initiation of gametogenesis induced by xanthurenic acid, specifically the gametocyte differentiation from the crescent-shaped form to the spherical form. Required for the gliding motility of ookinetes to reach and penetrate the midgut epithelium by promoting Ca(2+)-mediated activation of CDPK1 and CDPK4. Also required for microneme secretion in ookinete by promoting Ca(2+)-mediated activation of CDPK3. The sequence is that of cGMP-dependent protein kinase from Plasmodium falciparum (isolate NF54).